We begin with the raw amino-acid sequence, 421 residues long: Divalent metal cation transporter MntH (421 aa).

Helical transmembrane passes span 27–47, 51–71, 100–120, 128–148, 160–180, 201–221, 248–268, 289–309, 337–357, 358–378, and 396–416; these read LGPA…ATNI, SLFD…AIFL, WFLW…EFLG, LFHI…FAIV, GIIF…LFIA, AMLI…IYLH, ILVA…VSAA, PLLG…SGFS, LVTM…LKSL, IVSQ…LLLI, and IMGV…LYLT.

The protein belongs to the NRAMP family.

The protein localises to the cell membrane. H(+)-stimulated, divalent metal cation uptake system. The protein is Divalent metal cation transporter MntH of Caldanaerobacter subterraneus subsp. tengcongensis (strain DSM 15242 / JCM 11007 / NBRC 100824 / MB4) (Thermoanaerobacter tengcongensis).